The sequence spans 259 residues: Ras-related protein Rab-34 (259 aa).

At Met1 the chain carries N-acetylmethionine. GTP is bound by residues Ser62, Val63, Gly64, Lys65, Thr66, Asp78, Tyr81, and Thr84. Thr66 lines the Mg(2+) pocket. The short motif at 71–89 (RFCKDTFDKNYKATIGVDF) is the Switch 1 element. 2 residues coordinate Mg(2+): Thr84 and Asp107. Positions 108-127 (TAGQERFKCIASTYYRGAQA) match the Switch 2 motif. GTP-binding residues include Gly110, Lys167, Asp169, and Ser198. Ser241 is subject to Phosphoserine. S-geranylgeranyl cysteine attachment occurs at residues Cys257 and Cys258.

The protein belongs to the small GTPase superfamily. Rab family. In terms of assembly, interacts with RILP. The GTP-bound form interacts with REP15. Requires Mg(2+) as cofactor.

The protein resides in the cytoplasm. It localises to the golgi apparatus. Its subcellular location is the cytoplasmic vesicle. It is found in the phagosome. The protein localises to the phagosome membrane. The protein resides in the cell projection. It localises to the cilium. Its subcellular location is the cytoskeleton. It is found in the microtubule organizing center. The protein localises to the centrosome. The protein resides in the centriole. It catalyses the reaction GTP + H2O = GDP + phosphate + H(+). Its activity is regulated as follows. Regulated by guanine nucleotide exchange factors (GEFs) which promote the exchange of bound GDP for free GTP. Regulated by GTPase activating proteins (GAPs) which increase the GTP hydrolysis activity. Inhibited by GDP dissociation inhibitors (GDIs). In terms of biological role, the small GTPases Rab are key regulators of intracellular membrane trafficking, from the formation of transport vesicles to their fusion with membranes. Rabs cycle between an inactive GDP-bound form and an active GTP-bound form that is able to recruit to membranes different sets of downstream effectors directly responsible for vesicle formation, movement, tethering and fusion. RAB34 transports protein involved in the redistribution of lysosomes to the peri-Golgi region. Plays a role in the maturation of phagosomes that engulf pathogens, such as S.aureus and M.tuberculosis. Plays a role in the fusion of phagosomes with lysosomes. Required for the early steps of intracellular ciliogenesis, the cilium assembly pathway initiated by trafficking and docking of ciliary vesicles to the centrioles in the cytoplasm, followed by axoneme formation in the cytoplasm. After axoneme elongation, the centrioles migrate close to the cell surface so that ciliary vesicles can fuse with the plasma membrane to expose cilia to the extracellular space. It seems dispensable for ciliogenesis via the extracellular pathway where cilium assembly begins after migration and docking of the centriole to the plasma membrane. Also acts as a positive regulator of hedgehog signaling and regulates ciliary function. In Mus musculus (Mouse), this protein is Ras-related protein Rab-34.